A 193-amino-acid chain; its full sequence is Holliday junction branch migration complex subunit RuvA (193 aa).

The segment at Met-1 to Ala-64 is domain I. Positions Thr-65–Pro-144 are domain II. Positions Leu-145–Asp-151 are flexible linker. Residues Asp-151 to Gly-193 form a domain III region.

This sequence belongs to the RuvA family. In terms of assembly, homotetramer. Forms an RuvA(8)-RuvB(12)-Holliday junction (HJ) complex. HJ DNA is sandwiched between 2 RuvA tetramers; dsDNA enters through RuvA and exits via RuvB. An RuvB hexamer assembles on each DNA strand where it exits the tetramer. Each RuvB hexamer is contacted by two RuvA subunits (via domain III) on 2 adjacent RuvB subunits; this complex drives branch migration. In the full resolvosome a probable DNA-RuvA(4)-RuvB(12)-RuvC(2) complex forms which resolves the HJ.

It localises to the cytoplasm. Functionally, the RuvA-RuvB-RuvC complex processes Holliday junction (HJ) DNA during genetic recombination and DNA repair, while the RuvA-RuvB complex plays an important role in the rescue of blocked DNA replication forks via replication fork reversal (RFR). RuvA specifically binds to HJ cruciform DNA, conferring on it an open structure. The RuvB hexamer acts as an ATP-dependent pump, pulling dsDNA into and through the RuvAB complex. HJ branch migration allows RuvC to scan DNA until it finds its consensus sequence, where it cleaves and resolves the cruciform DNA. This is Holliday junction branch migration complex subunit RuvA from Cupriavidus metallidurans (strain ATCC 43123 / DSM 2839 / NBRC 102507 / CH34) (Ralstonia metallidurans).